Reading from the N-terminus, the 348-residue chain is Competence protein ComGA (348 aa).

145 to 152 lines the ATP pocket; that stretch reads GATGSGKT.

It belongs to the GSP E family.

It localises to the cell membrane. Required for uptake of DNA by competent cells. The protein is Competence protein ComGA (comGA) of Halalkalibacterium halodurans (strain ATCC BAA-125 / DSM 18197 / FERM 7344 / JCM 9153 / C-125) (Bacillus halodurans).